Consider the following 224-residue polypeptide: Peroxiredoxin-6 (224 aa).

The Thioredoxin domain maps to 5 to 169; it reads LLLGDEAPNF…ILRVVISLQL (165 aa). The segment at 31–40 is required and sufficient for targeting to lysosomes and lamellar bodies; the sequence is DSWGILFSHP. A Phosphothreonine modification is found at Thr-44. The Cysteine sulfenic acid (-SOH) intermediate; for peroxidase activity role is filled by Cys-47. Residue Lys-63 is modified to N6-acetyllysine. Residue Tyr-89 is modified to Phosphotyrosine. Residue Asp-140 is the For phospholipase activity of the active site. Thr-177 is subject to Phosphothreonine; by MAPK. Lys-209 carries the N6-acetyllysine; alternate modification. Lys-209 carries the N6-succinyllysine; alternate modification.

Belongs to the peroxiredoxin family. Prx6 subfamily. Homodimer. Interacts with GSTP1; mediates PRDX6 glutathionylation and regeneration. Interacts with APEX1. Interacts with STH. May interact with FAM168B. May interact with HTR2A. In terms of processing, irreversibly inactivated by overoxidation of Cys-47 to sulfinic acid (Cys-SO(2)H) and sulfonic acid (Cys-SO(3)H) forms upon oxidative stress. Post-translationally, phosphorylation at Thr-177 by MAP kinases increases the phospholipase activity of the enzyme. The phosphorylated form exhibits a greater lysophosphatidylcholine acyltransferase activity compared to the non-phosphorylated form.

The protein localises to the cytoplasm. It localises to the lysosome. It carries out the reaction a hydroperoxide + 2 glutathione = an alcohol + glutathione disulfide + H2O. The enzyme catalyses a 1,2-diacyl-sn-glycero-3-phosphocholine + H2O = a 1-acyl-sn-glycero-3-phosphocholine + a fatty acid + H(+). The catalysed reaction is a 1-acyl-sn-glycero-3-phosphocholine + an acyl-CoA = a 1,2-diacyl-sn-glycero-3-phosphocholine + CoA. It catalyses the reaction 1-hexadecanoyl-sn-glycero-3-phosphocholine + hexadecanoyl-CoA = 1,2-dihexadecanoyl-sn-glycero-3-phosphocholine + CoA. It carries out the reaction 1,2-dihexadecanoyl-sn-glycero-3-phosphocholine + H2O = 1-hexadecanoyl-sn-glycero-3-phosphocholine + hexadecanoate + H(+). Its function is as follows. Thiol-specific peroxidase that catalyzes the reduction of hydrogen peroxide and organic hydroperoxides to water and alcohols, respectively. Can reduce H(2)O(2) and short chain organic, fatty acid, and phospholipid hydroperoxides. Also has phospholipase activity, and can therefore either reduce the oxidized sn-2 fatty acyl group of phospholipids (peroxidase activity) or hydrolyze the sn-2 ester bond of phospholipids (phospholipase activity). These activities are dependent on binding to phospholipids at acidic pH and to oxidized phospholipds at cytosolic pH. Plays a role in cell protection against oxidative stress by detoxifying peroxides and in phospholipid homeostasis. Exhibits acyl-CoA-dependent lysophospholipid acyltransferase which mediates the conversion of lysophosphatidylcholine (1-acyl-sn-glycero-3-phosphocholine or LPC) into phosphatidylcholine (1,2-diacyl-sn-glycero-3-phosphocholine or PC). Shows a clear preference for LPC as the lysophospholipid and for palmitoyl CoA as the fatty acyl substrate. This chain is Peroxiredoxin-6 (PRDX6), found in Macaca fascicularis (Crab-eating macaque).